The sequence spans 355 residues: Protein ATP1B4 (355 aa).

Residues 1–108 (MRRQLRSRRA…SLARTGQSWS (108 aa)) are Nuclear-facing. A disordered region spans residues 33–77 (ADEEEEAEEEARVMVVPDLEEEEEEEEEKEEEEKEEEDSHSQETD). The segment covering 50 to 68 (DLEEEEEEEEEKEEEEKEE) has biased composition (acidic residues). A helical; Signal-anchor for type II membrane protein membrane pass occupies residues 109–129 (LILVIYFFFYASLAAVITLCM). Residues 130–355 (YTLFLTISPY…RVIFTLNIET (226 aa)) are Perinuclear space-facing.

Belongs to the X(+)/potassium ATPases subunit beta family. In terms of assembly, associates with a SMAD7-transcriptional complex. Interacts with SNW1 and TOR1AIP1. Does not associate with known Na,K-ATPase alpha-subunits.

Its subcellular location is the nucleus inner membrane. In terms of biological role, may act as a transcriptional coregulator during muscle development through its interaction with SNW1. Has lost its ancestral function as a Na,K-ATPase beta-subunit. The protein is Protein ATP1B4 (ATP1B4) of Bos taurus (Bovine).